A 432-amino-acid polypeptide reads, in one-letter code: Alpha-2 adrenergic receptor (432 aa).

Topologically, residues 1–32 (MDPLNATGMDAFTAIHLNASWSADSGYSLAAI) are extracellular. 2 N-linked (GlcNAc...) asparagine glycosylation sites follow: N5 and N18. A helical transmembrane segment spans residues 33–57 (ASIAALVSFLILFTVVGNILVVIAV). Residues 58-69 (LTSRALKAPQNL) are Cytoplasmic-facing. The chain crosses the membrane as a helical span at residues 70 to 95 (FLVSLATADILVATLVMPFSLANELM). The Extracellular portion of the chain corresponds to 96–105 (GYWYFGKVWC). A disulfide bridge connects residues C105 and C183. The chain crosses the membrane as a helical span at residues 106–128 (GIYLALDVLFCTSSIVHLCAISL). Residues 129-149 (DRYWSVTQAVEYNLKRTPKRV) are Cytoplasmic-facing. The chain crosses the membrane as a helical span at residues 150–172 (KCIIVIVWLISAFISSPPLLSID). The Extracellular segment spans residues 173 to 188 (SNNYISSQPQCMLNDD). The helical transmembrane segment at 189 to 212 (TWYILSSSMASFFAPCLIMILVYI) threads the bilayer. The Cytoplasmic segment spans residues 213–356 (RIYQVAKTRT…QAREKRFTFV (144 aa)). The disordered stretch occupies residues 222–319 (TRSMSGKEPR…SISKQSARIS (98 aa)). 2 stretches are compositionally biased toward polar residues: residues 235-246 (VTQTENGLNKAN) and 265-275 (SQRTVTIGQQT). The segment covering 288–300 (GKGHKPQRQDSQR) has biased composition (basic and acidic residues). Over residues 309–319 (SSISKQSARIS) the composition is skewed to polar residues. Residues 357-380 (LAVVMGVFVVCWFPFFFSYSLHAV) form a helical membrane-spanning segment. Residues 381-393 (CRDYCKIPDTLFK) lie on the Extracellular side of the membrane. The chain crosses the membrane as a helical span at residues 394 to 413 (FFWIGYCNSSLNPAIYTIFN). The Cytoplasmic segment spans residues 414–432 (RDFRRAFQKILCKSWKKSF).

Belongs to the G-protein coupled receptor 1 family.

It localises to the cell membrane. Functionally, alpha-2 adrenergic receptors mediate the catecholamine-induced inhibition of adenylate cyclase through the action of G proteins. This chain is Alpha-2 adrenergic receptor, found in Labrus ossifagus (Cuckoo wrasse).